Reading from the N-terminus, the 90-residue chain is Inactive casein kinase II subunit alpha-2 (90 aa).

ATP is bound by residues 40–48 (VGRGKYSEV) and lysine 63.

The protein belongs to the protein kinase superfamily. Ser/Thr protein kinase family. CK2 subfamily.

The Nipponbare allele of HD6 contains a premature stop codon, resulting in a truncated non-functional product. This chain is Inactive casein kinase II subunit alpha-2, found in Oryza sativa subsp. japonica (Rice).